The chain runs to 185 residues: Large ribosomal subunit protein uL5 (185 aa).

Belongs to the universal ribosomal protein uL5 family. In terms of assembly, part of the 50S ribosomal subunit; part of the 5S rRNA/L5/L18/L25 subcomplex. Contacts the 5S rRNA and the P site tRNA. Forms a bridge to the 30S subunit in the 70S ribosome.

Functionally, this is one of the proteins that bind and probably mediate the attachment of the 5S RNA into the large ribosomal subunit, where it forms part of the central protuberance. In the 70S ribosome it contacts protein S13 of the 30S subunit (bridge B1b), connecting the 2 subunits; this bridge is implicated in subunit movement. Contacts the P site tRNA; the 5S rRNA and some of its associated proteins might help stabilize positioning of ribosome-bound tRNAs. The protein is Large ribosomal subunit protein uL5 of Rhodopseudomonas palustris (strain HaA2).